We begin with the raw amino-acid sequence, 205 residues long: Disintegrin-like leberagin-C (205 aa).

The region spanning 4–90 (PPVCGNELLE…DCPIDRFHRN (87 aa)) is the Disintegrin domain. 9 cysteine pairs are disulfide-bonded: C7-C26, C18-C36, C62-C82, C69-C94, C101-C106, C113-C128, C151-C158, C163-C171, and C193-C198. The short motif at 68–70 (ECD) is the D/ECD-tripeptide element. N-linked (GlcNAc...) asparagine glycosylation is present at N120.

It belongs to the venom metalloproteinase (M12B) family. P-III subfamily. P-IIIb sub-subfamily. In terms of assembly, monomer. As to expression, expressed by the venom gland.

It localises to the secreted. Its function is as follows. Inhibits platelet aggregation induced by thrombin and arachidonic acid with IC(50) of 40 and 50 nM respectively (in rabbit platetelet-rich plasma). It also inhibits the adhesion of melanoma tumor cells on fibrinogen and fibronectin, by interfering with the function of alpha-V/beta-3 (ITGAV/ITGB3) and, to a lesser extent, with alpha-V/beta-6 (ITGAV/ITGB6) and alpha-5/beta-1 (ITGA5/ITGB1) integrins. This is Disintegrin-like leberagin-C from Macrovipera lebetina transmediterranea (Blunt-nosed viper).